A 417-amino-acid polypeptide reads, in one-letter code: NADH-quinone oxidoreductase subunit D 2 (417 aa).

Belongs to the complex I 49 kDa subunit family. As to quaternary structure, NDH-1 is composed of 14 different subunits. Subunits NuoB, C, D, E, F, and G constitute the peripheral sector of the complex.

The protein resides in the cell membrane. It catalyses the reaction a quinone + NADH + 5 H(+)(in) = a quinol + NAD(+) + 4 H(+)(out). In terms of biological role, NDH-1 shuttles electrons from NADH, via FMN and iron-sulfur (Fe-S) centers, to quinones in the respiratory chain. The immediate electron acceptor for the enzyme in this species is believed to be ubiquinone. Couples the redox reaction to proton translocation (for every two electrons transferred, four hydrogen ions are translocated across the cytoplasmic membrane), and thus conserves the redox energy in a proton gradient. This Roseiflexus sp. (strain RS-1) protein is NADH-quinone oxidoreductase subunit D 2.